The sequence spans 351 residues: 3-dehydroquinate synthase (351 aa).

Residues 60–65, 94–98, 118–119, lysine 131, lysine 140, and 158–161 contribute to the NAD(+) site; these read DGEEYK, GVISD, TT, and FLKT. Residues glutamate 173, histidine 239, and histidine 256 each contribute to the Zn(2+) site.

This sequence belongs to the sugar phosphate cyclases superfamily. Dehydroquinate synthase family. Co(2+) serves as cofactor. Requires Zn(2+) as cofactor. It depends on NAD(+) as a cofactor.

The protein resides in the cytoplasm. The enzyme catalyses 7-phospho-2-dehydro-3-deoxy-D-arabino-heptonate = 3-dehydroquinate + phosphate. Its pathway is metabolic intermediate biosynthesis; chorismate biosynthesis; chorismate from D-erythrose 4-phosphate and phosphoenolpyruvate: step 2/7. Functionally, catalyzes the conversion of 3-deoxy-D-arabino-heptulosonate 7-phosphate (DAHP) to dehydroquinate (DHQ). This chain is 3-dehydroquinate synthase, found in Campylobacter jejuni subsp. doylei (strain ATCC BAA-1458 / RM4099 / 269.97).